Consider the following 340-residue polypeptide: Nuclear hormone receptor family member nhr-197 (340 aa).

Residues 1–75 (MNCVVCSGRA…VGMTLAPLND (75 aa)) constitute a DNA-binding region (nuclear receptor). 2 consecutive NR C4-type zinc fingers follow at residues 3–23 (CVVC…CFAC) and 39–58 (CKRI…CRAC). The NR LBD domain occupies 98-337 (KNDKNYSHFV…KRIMQDLFSN (240 aa)).

The protein belongs to the nuclear hormone receptor family.

The protein resides in the nucleus. Its function is as follows. Orphan nuclear receptor. The polypeptide is Nuclear hormone receptor family member nhr-197 (nhr-197) (Caenorhabditis elegans).